Consider the following 525-residue polypeptide: G patch domain-containing protein 3 (525 aa).

Disordered regions lie at residues 54–85 (ERGPPQASPEAARAGPDPAAEDPVLAQAPASD) and 246–317 (EQEE…QERT). A compositionally biased stretch (acidic residues) spans 274–299 (DEPEDEGQQQEEEEESGSEEDDDRGE). The span at 300-317 (EWERHEALHEDVTGQERT) shows a compositional bias: basic and acidic residues. The 49-residue stretch at 411 to 459 (TKGIGRKVMERQGWAEGQGLGSRCSGVPEALDGDGQHPRCKRGLGYHGE) folds into the G-patch domain.

In terms of assembly, interacts with mitochondrial MAVS; the interaction is markedly increased upon viral infection.

The protein localises to the nucleus. It localises to the cytoplasm. Functionally, involved in transcriptional regulation. It is able to activate transcription from CXCR4 promoter and therefore it might control neural crest cell migration involved in ocular and craniofacial development. Is a negative regulator of immune antiviral response, acting via down-regulation of RIG-I-like receptors signaling and inhibition of type I interferon production. The control mechanism involves interaction with mitochondrial MAVS and inhibition of MAVS assembly with downstream proteins implicated in antiviral response, such as TBK1 and TRAF6. The sequence is that of G patch domain-containing protein 3 (Gpatch3) from Mus musculus (Mouse).